The chain runs to 440 residues: UDP-N-acetylmuramoylalanine--D-glutamate ligase (440 aa).

112 to 118 (GSNGKST) provides a ligand contact to ATP.

It belongs to the MurCDEF family.

Its subcellular location is the cytoplasm. It carries out the reaction UDP-N-acetyl-alpha-D-muramoyl-L-alanine + D-glutamate + ATP = UDP-N-acetyl-alpha-D-muramoyl-L-alanyl-D-glutamate + ADP + phosphate + H(+). It functions in the pathway cell wall biogenesis; peptidoglycan biosynthesis. Its function is as follows. Cell wall formation. Catalyzes the addition of glutamate to the nucleotide precursor UDP-N-acetylmuramoyl-L-alanine (UMA). This chain is UDP-N-acetylmuramoylalanine--D-glutamate ligase, found in Blochmanniella pennsylvanica (strain BPEN).